We begin with the raw amino-acid sequence, 1962 residues long: Myosin heavy chain, muscle (1962 aa).

One can recognise a Myosin N-terminal SH3-like domain in the interval 33 to 82; sequence DSKKSCWIPDEKEGYLLGEIKATKGDIVSVGLQGGEVRDIKSEKVEKVNP. Residues 86–777 enclose the Myosin motor domain; that stretch reads EKIEDMADMT…VLGQMEEFRD (692 aa). 179 to 186 is a binding site for ATP; that stretch reads GESGAGKT. The segment at 656–678 is actin-binding; that stretch reads LNSLMTTLRSTQPHFVRCIIPNE. Residues 780–809 form the IQ domain; it reads LGKIMSWMQAWARGYLSRKGFKKLQEQRVA. Residues 802-1927 adopt a coiled-coil conformation; sequence KLQEQRVALK…KFRAKGRAGS (1126 aa). 2 disordered regions span residues 1822–1862 and 1922–1962; these read ENEL…NHER and KGRA…ENEF.

It belongs to the TRAFAC class myosin-kinesin ATPase superfamily. Myosin family. As to quaternary structure, muscle myosin is a hexameric protein that consists of 2 heavy chain subunits (MHC), 2 alkali light chain subunits (MLC) and 2 regulatory light chain subunits (MLC-2). As to expression, expressed in larval and adult muscles. Isoforms containing exon 9a are expressed in indirect flight muscles, exons 9a and 9b are expressed in jump muscles, exons 9b and 9c are expressed in other larval and adult muscles.

Its subcellular location is the cytoplasm. It is found in the myofibril. In terms of biological role, muscle contraction. This Drosophila melanogaster (Fruit fly) protein is Myosin heavy chain, muscle (Mhc).